We begin with the raw amino-acid sequence, 378 residues long: Alkaline elastase YaB (378 aa).

An N-terminal signal peptide occupies residues 1–27 (MNKKMGKIVAGTALIISVAFSSSIAQA). A propeptide spanning residues 28–110 (AEEAKEKYLI…IEEDAEVTTM (83 aa)) is cleaved from the precursor. A Ca(2+)-binding site is contributed by glutamine 111. The region spanning 114–377 (PWGINRVQAP…SGLVNAEAAT (264 aa)) is the Peptidase S8 domain. Aspartate 141 (charge relay system) is an active-site residue. Aspartate 149 is a binding site for Ca(2+). Catalysis depends on histidine 171, which acts as the Charge relay system. Ca(2+)-binding residues include leucine 182, asparagine 184, isoleucine 186, valine 188, alanine 272, tyrosine 274, and alanine 277. The Charge relay system role is filled by serine 324.

The protein belongs to the peptidase S8 family. Ca(2+) is required as a cofactor.

The protein resides in the secreted. Functionally, digests elastin efficiently, has a substrate preference for Ala in P1 position. In Bacillus sp. (strain YaB), this protein is Alkaline elastase YaB (ale).